A 208-amino-acid chain; its full sequence is Orotidine 5'-phosphate decarboxylase (208 aa).

Residues aspartate 7, lysine 29, 57–66 (DLKLADIPNT), serine 109, 162–172 (PGIGAQGGKAK), glycine 185, and arginine 186 contribute to the substrate site. Catalysis depends on lysine 59, which acts as the Proton donor.

Belongs to the OMP decarboxylase family. Type 1 subfamily. In terms of assembly, homodimer.

The enzyme catalyses orotidine 5'-phosphate + H(+) = UMP + CO2. It functions in the pathway pyrimidine metabolism; UMP biosynthesis via de novo pathway; UMP from orotate: step 2/2. Its function is as follows. Catalyzes the decarboxylation of orotidine 5'-monophosphate (OMP) to uridine 5'-monophosphate (UMP). The sequence is that of Orotidine 5'-phosphate decarboxylase from Pyrococcus abyssi (strain GE5 / Orsay).